The primary structure comprises 156 residues: Transcription elongation factor GreA (156 aa).

A coiled-coil region spans residues 1 to 84 (MAKYTISKHR…IEDVMRSTDE (84 aa)).

This sequence belongs to the GreA/GreB family.

Necessary for efficient RNA polymerase transcription elongation past template-encoded arresting sites. The arresting sites in DNA have the property of trapping a certain fraction of elongating RNA polymerases that pass through, resulting in locked ternary complexes. Cleavage of the nascent transcript by cleavage factors such as GreA or GreB allows the resumption of elongation from the new 3'terminus. GreA releases sequences of 2 to 3 nucleotides. The protein is Transcription elongation factor GreA of Ureaplasma urealyticum serovar 10 (strain ATCC 33699 / Western).